The following is a 270-amino-acid chain: Aliphatic sulfonates import ATP-binding protein SsuB (270 aa).

The ABC transporter domain occupies 17-238 (LASKGLRKTF…ARGSHRLAAL (222 aa)). 49–56 (GRSGCGKS) lines the ATP pocket. The disordered stretch occupies residues 248–270 (STPGTAPEPDPVAPLPTQLRWAH).

Belongs to the ABC transporter superfamily. Aliphatic sulfonates importer (TC 3.A.1.17.2) family. As to quaternary structure, the complex is composed of two ATP-binding proteins (SsuB), two transmembrane proteins (SsuC) and a solute-binding protein (SsuA).

It is found in the cell inner membrane. The catalysed reaction is ATP + H2O + aliphatic sulfonate-[sulfonate-binding protein]Side 1 = ADP + phosphate + aliphatic sulfonateSide 2 + [sulfonate-binding protein]Side 1.. Functionally, part of the ABC transporter complex SsuABC involved in aliphatic sulfonates import. Responsible for energy coupling to the transport system. The polypeptide is Aliphatic sulfonates import ATP-binding protein SsuB (Pseudomonas putida (strain ATCC 47054 / DSM 6125 / CFBP 8728 / NCIMB 11950 / KT2440)).